The chain runs to 356 residues: Alanine racemase, catabolic (356 aa).

The Proton acceptor; specific for D-alanine role is filled by Lys-35. At Lys-35 the chain carries N6-(pyridoxal phosphate)lysine. Arg-130 is a substrate binding site. The active-site Proton acceptor; specific for L-alanine is the Tyr-253. Met-301 lines the substrate pocket.

It belongs to the alanine racemase family. Monomer. Requires pyridoxal 5'-phosphate as cofactor.

The enzyme catalyses L-alanine = D-alanine. Its activity is regulated as follows. Inactivated by D- and L-beta-fluoroalanine, D- and L-beta-chloroalanine, and O-acetyl-D-serine. Functionally, isomerizes L-alanine to D-alanine which is then oxidized to pyruvate by DadA. This Salmonella typhimurium (strain LT2 / SGSC1412 / ATCC 700720) protein is Alanine racemase, catabolic (dadX).